Here is a 1186-residue protein sequence, read N- to C-terminus: Trafficking protein particle complex II-specific subunit 120 homolog (1186 aa).

Disordered regions lie at residues 777-824 and 964-984; these read PTDS…EKES and TKDP…SEKN. Positions 779-792 are enriched in polar residues; it reads DSDNTMSSGRNAAG. Position 971 is a phosphoserine (serine 971). Positions 972-981 are enriched in low complexity; the sequence is PSSSRNPSFS.

This sequence belongs to the TRS120 family. Part of the multisubunit TRAPP (transport protein particle) II complex composed of BET3, BET5, TRS20, TRS23, TRS31, TRS33, TRS65, TRS85, TRS120 and TRS130. As to expression, expressed in roots, leaves, stems and flowers.

It is found in the golgi apparatus. It localises to the trans-Golgi network. The protein resides in the early endosome. Functionally, specific subunit of the TRAPP II complex, a highly conserved vesicle tethering complex that is required for the proper transport of proteins in post-Golgi trafficking pathways to the growing cell plate in mitotic active cells. Required for the polarized and selective transport of PIN2 and probably PIN1 to the plasma membrane. Not required for ER-to-Golgi as well as biosynthetic and endocytic vacuolar transport. The sequence is that of Trafficking protein particle complex II-specific subunit 120 homolog from Arabidopsis thaliana (Mouse-ear cress).